A 176-amino-acid chain; its full sequence is dCTP deaminase (176 aa).

DCTP-binding positions include 99-104 (RSTLAR) and Asp-115. The Proton donor/acceptor role is filled by Glu-125. Gln-163 lines the dCTP pocket.

The protein belongs to the dCTP deaminase family. Homotrimer.

It carries out the reaction dCTP + H2O + H(+) = dUTP + NH4(+). It functions in the pathway pyrimidine metabolism; dUMP biosynthesis; dUMP from dCTP (dUTP route): step 1/2. Functionally, catalyzes the deamination of dCTP to dUTP. This is dCTP deaminase from Pyrobaculum neutrophilum (strain DSM 2338 / JCM 9278 / NBRC 100436 / V24Sta) (Thermoproteus neutrophilus).